A 248-amino-acid polypeptide reads, in one-letter code: Triosephosphate isomerase (248 aa).

2 residues coordinate D-glyceraldehyde 3-phosphate: Asn-10 and Lys-12. His-95 functions as the Electrophile in the catalytic mechanism. The active-site Proton acceptor is Glu-165. D-glyceraldehyde 3-phosphate is bound by residues Gly-171, Leu-230, and 232-233 (GN).

This sequence belongs to the triosephosphate isomerase family. As to quaternary structure, homodimer.

It catalyses the reaction D-glyceraldehyde 3-phosphate = dihydroxyacetone phosphate. It participates in carbohydrate biosynthesis; gluconeogenesis. The protein operates within carbohydrate degradation; glycolysis; D-glyceraldehyde 3-phosphate from glycerone phosphate: step 1/1. Catalyzes the interconversion of glyceraldehyde 3-phosphate and dihydroxyacetone phosphate in the glycolytic and gluconeogenic pathways. This is Triosephosphate isomerase from Plasmodium falciparum (isolate 3D7).